The following is a 297-amino-acid chain: Probable GTP 3',8-cyclase (297 aa).

The Radical SAM core domain occupies Arg-4–Asp-227. Arg-13 is a binding site for GTP. Residues Cys-20 and Cys-24 each coordinate [4Fe-4S] cluster. An S-adenosyl-L-methionine-binding site is contributed by Tyr-26. Cys-27 is a binding site for [4Fe-4S] cluster. Residue Lys-61 participates in GTP binding. Residue Gly-65 coordinates S-adenosyl-L-methionine. A GTP-binding site is contributed by Thr-91. Ser-115 provides a ligand contact to S-adenosyl-L-methionine. Lys-152 is a GTP binding site. Residues Cys-243 and Cys-246 each contribute to the [4Fe-4S] cluster site. A GTP-binding site is contributed by Arg-248–Arg-250. Cys-260 contributes to the [4Fe-4S] cluster binding site.

Belongs to the radical SAM superfamily. MoaA family. It depends on [4Fe-4S] cluster as a cofactor.

It carries out the reaction GTP + AH2 + S-adenosyl-L-methionine = (8S)-3',8-cyclo-7,8-dihydroguanosine 5'-triphosphate + 5'-deoxyadenosine + L-methionine + A + H(+). The protein operates within cofactor biosynthesis; molybdopterin biosynthesis. Functionally, catalyzes the cyclization of GTP to (8S)-3',8-cyclo-7,8-dihydroguanosine 5'-triphosphate. This is Probable GTP 3',8-cyclase from Methanococcus maripaludis (strain DSM 14266 / JCM 13030 / NBRC 101832 / S2 / LL).